Consider the following 279-residue polypeptide: Lysozyme-like protein 2 (279 aa).

The N-terminal stretch at methionine 1–proline 19 is a signal peptide. The 219-residue stretch at methionine 47–methionine 265 folds into the Ch-type lysozyme domain.

The protein belongs to the glycosyl hydrolase 25 family. As to expression, expressed in intestine.

Functionally, involved in resistance to Gram-positive bacteria P.aeruginosa or B.thuringiensis infection. The sequence is that of Lysozyme-like protein 2 from Caenorhabditis elegans.